A 423-amino-acid chain; its full sequence is Histidine--tRNA ligase (423 aa).

Belongs to the class-II aminoacyl-tRNA synthetase family. As to quaternary structure, homodimer.

It is found in the cytoplasm. It carries out the reaction tRNA(His) + L-histidine + ATP = L-histidyl-tRNA(His) + AMP + diphosphate + H(+). In Staphylococcus haemolyticus (strain JCSC1435), this protein is Histidine--tRNA ligase.